The chain runs to 131 residues: Small ribosomal subunit protein uS8 (131 aa).

Belongs to the universal ribosomal protein uS8 family. Part of the 30S ribosomal subunit. Contacts proteins S5 and S12.

In terms of biological role, one of the primary rRNA binding proteins, it binds directly to 16S rRNA central domain where it helps coordinate assembly of the platform of the 30S subunit. This is Small ribosomal subunit protein uS8 from Vesicomyosocius okutanii subsp. Calyptogena okutanii (strain HA).